A 113-amino-acid chain; its full sequence is UPF0122 protein SSU98_0878 (113 aa).

It belongs to the UPF0122 family.

Functionally, might take part in the signal recognition particle (SRP) pathway. This is inferred from the conservation of its genetic proximity to ftsY/ffh. May be a regulatory protein. This Streptococcus suis (strain 98HAH33) protein is UPF0122 protein SSU98_0878.